The chain runs to 103 residues: Large ribosomal subunit protein bL21 (103 aa).

The protein belongs to the bacterial ribosomal protein bL21 family. In terms of assembly, part of the 50S ribosomal subunit. Contacts protein L20.

This protein binds to 23S rRNA in the presence of protein L20. In Idiomarina loihiensis (strain ATCC BAA-735 / DSM 15497 / L2-TR), this protein is Large ribosomal subunit protein bL21.